The primary structure comprises 309 residues: Protein FdhE homolog (309 aa).

This sequence belongs to the FdhE family.

Its subcellular location is the cytoplasm. Functionally, necessary for formate dehydrogenase activity. In Cronobacter sakazakii (strain ATCC BAA-894) (Enterobacter sakazakii), this protein is Protein FdhE homolog.